Here is a 190-residue protein sequence, read N- to C-terminus: Ribonuclease HII (190 aa).

An RNase H type-2 domain is found at 3–190 (KLIAGVDEVG…KPVKALLEEK (188 aa)). Residues Asp-9, Glu-10, and Asp-101 each coordinate a divalent metal cation.

The protein belongs to the RNase HII family. The cofactor is Mn(2+). It depends on Mg(2+) as a cofactor.

The protein localises to the cytoplasm. It catalyses the reaction Endonucleolytic cleavage to 5'-phosphomonoester.. Its function is as follows. Endonuclease that specifically degrades the RNA of RNA-DNA hybrids. The chain is Ribonuclease HII from Alteromonas mediterranea (strain DSM 17117 / CIP 110805 / LMG 28347 / Deep ecotype).